The chain runs to 144 residues: MELNNLKPAEGSKHAKRRVGRGIGSGLGKTAGRGHKGQKSRSGGFHKVGFEGGQMPLQRRLPKRGFTSLTKEFVGEVRLSDLEKLPVDEIDLLALKQAGLIGEMITSAKIIKTGELKRKVVVKGLGATKGARAAIEAAGGSFAE.

A disordered region spans residues M1–L57. The segment covering R21 to A31 has biased composition (gly residues).

Belongs to the universal ribosomal protein uL15 family. In terms of assembly, part of the 50S ribosomal subunit.

Binds to the 23S rRNA. This Paraburkholderia phytofirmans (strain DSM 17436 / LMG 22146 / PsJN) (Burkholderia phytofirmans) protein is Large ribosomal subunit protein uL15.